The primary structure comprises 335 residues: Probable magnesium transporter NIPA1 (335 aa).

Topologically, residues 1–7 are extracellular; the sequence is MDQMSPD. Residues 8–28 traverse the membrane as a helical segment; the sequence is NINGVILAVSSSIFIGSSFII. Over 29–55 the chain is Cytoplasmic; the sequence is KKKGLKKAGASGVRAGEGGYGYLKEPW. A helical membrane pass occupies residues 56-76; that stretch reads WWAGMITMIVGEVANFAAYAF. Residues 77-79 are Extracellular-facing; that stretch reads APA. The chain crosses the membrane as a helical span at residues 80-100; sequence ILVTPLGALSIIFSAVLAHFI. Over 101–104 the chain is Cytoplasmic; sequence LKEK. A helical membrane pass occupies residues 105 to 125; that stretch reads LHMFGILGCILCVVGSTTIVL. The Extracellular segment spans residues 126-143; that stretch reads HAPHEQKIESVKQIWQLA. Residues 144 to 164 traverse the membrane as a helical segment; it reads IEPGFLVYSAVIVIVVAILIF. Residues 165–179 lie on the Cytoplasmic side of the membrane; it reads YYEPRYGKTHMIVYV. A helical transmembrane segment spans residues 180-200; that stretch reads GICSLMGSLTVMSVKAVAIAI. Over 201–212 the chain is Extracellular; that stretch reads KLTFSGTNQFKY. A helical transmembrane segment spans residues 213-233; sequence FNTWIFILVVATCCILQINYL. At 234-244 the chain is on the cytoplasmic side; sequence NKALDTFNTAV. Residues 245–265 form a helical membrane-spanning segment; that stretch reads ISPVYYVMFTTFTIIASMIMF. At 266 to 272 the chain is on the extracellular side; it reads KDWASQS. A helical membrane pass occupies residues 273–293; the sequence is GLKIATELCGFVTILSGTFLL. Topologically, residues 294-335 are cytoplasmic; sequence HKTKDMGNSASGRGSISMPTRDTPVFTNSGSGRSSSSDKVAS. Residues 303-321 show a composition bias toward polar residues; sequence ASGRGSISMPTRDTPVFTN. Positions 303–335 are disordered; it reads ASGRGSISMPTRDTPVFTNSGSGRSSSSDKVAS. Over residues 322 to 335 the composition is skewed to low complexity; it reads SGSGRSSSSDKVAS.

It belongs to the NIPA (TC 2.A.7) family. In terms of assembly, homodimer.

Its subcellular location is the cell membrane. It localises to the early endosome. Functionally, acts as a Mg(2+) transporter. Can also transport other divalent cations such as Fe(2+), Sr(2+), Ba(2+), Mn(2+) and Co(2+) but to a much less extent than Mg(2+). The protein is Probable magnesium transporter NIPA1 of Arabidopsis thaliana (Mouse-ear cress).